Reading from the N-terminus, the 420-residue chain is Serine hydroxymethyltransferase (420 aa).

Residues Leu121 and 125-127 (GHL) each bind (6S)-5,6,7,8-tetrahydrofolate. Lys230 bears the N6-(pyridoxal phosphate)lysine mark. Residue 354–356 (SPF) coordinates (6S)-5,6,7,8-tetrahydrofolate.

Belongs to the SHMT family. As to quaternary structure, homodimer. Pyridoxal 5'-phosphate serves as cofactor.

The protein localises to the cytoplasm. The catalysed reaction is (6R)-5,10-methylene-5,6,7,8-tetrahydrofolate + glycine + H2O = (6S)-5,6,7,8-tetrahydrofolate + L-serine. The protein operates within one-carbon metabolism; tetrahydrofolate interconversion. Its pathway is amino-acid biosynthesis; glycine biosynthesis; glycine from L-serine: step 1/1. In terms of biological role, catalyzes the reversible interconversion of serine and glycine with tetrahydrofolate (THF) serving as the one-carbon carrier. This reaction serves as the major source of one-carbon groups required for the biosynthesis of purines, thymidylate, methionine, and other important biomolecules. Also exhibits THF-independent aldolase activity toward beta-hydroxyamino acids, producing glycine and aldehydes, via a retro-aldol mechanism. This is Serine hydroxymethyltransferase from Rickettsia africae (strain ESF-5).